The sequence spans 148 residues: MGTSSARPAVLALAGLALLLLLCLGPGDVSGNKLKKMLQKREGPVPSKTNVAVSEHTAKEFLGGLKRAKRQLWDRTRPEVQQWYQQFLYMGFDEAKFEDDVNYWLNRNQNGHDYYGDYYQRHYDEDAAIGPRSREGFRHGASVNYDDY.

The first 31 residues, 1–31, serve as a signal peptide directing secretion; sequence MGTSSARPAVLALAGLALLLLLCLGPGDVSG. 2 consecutive propeptides follow at residues 32-68 and 133-148; these read NKLK…LKRA and SREG…YDDY.

The protein belongs to the augurin family. As to expression, expressed in the brain, with expression in the choroid plexus and the ventricular ependymal cells (at protein level).

Its subcellular location is the secreted. The protein resides in the cytoplasm. It is found in the apical cell membrane. Functionally, probable hormone that may attenuate cell proliferation and induce senescence of oligodendrocyte and neural precursor cells in the central nervous system. ECRG4-induced senescence is characterized by G1 arrest, RB1 dephosphorylation and accelerated CCND1 and CCND3 proteasomal degradation. The chain is Augurin from Rattus norvegicus (Rat).